The primary structure comprises 384 residues: Dual-specificity RNA methyltransferase RlmN (384 aa).

Glutamate 105 functions as the Proton acceptor in the catalytic mechanism. One can recognise a Radical SAM core domain in the interval glutamate 111–aspartate 350. Cysteine 118 and cysteine 355 form a disulfide bridge. [4Fe-4S] cluster contacts are provided by cysteine 125, cysteine 129, and cysteine 132. S-adenosyl-L-methionine-binding positions include glycine 179–glutamate 180, serine 211, serine 233–histidine 235, and asparagine 312. The active-site S-methylcysteine intermediate is cysteine 355.

It belongs to the radical SAM superfamily. RlmN family. [4Fe-4S] cluster serves as cofactor.

Its subcellular location is the cytoplasm. The enzyme catalyses adenosine(2503) in 23S rRNA + 2 reduced [2Fe-2S]-[ferredoxin] + 2 S-adenosyl-L-methionine = 2-methyladenosine(2503) in 23S rRNA + 5'-deoxyadenosine + L-methionine + 2 oxidized [2Fe-2S]-[ferredoxin] + S-adenosyl-L-homocysteine. The catalysed reaction is adenosine(37) in tRNA + 2 reduced [2Fe-2S]-[ferredoxin] + 2 S-adenosyl-L-methionine = 2-methyladenosine(37) in tRNA + 5'-deoxyadenosine + L-methionine + 2 oxidized [2Fe-2S]-[ferredoxin] + S-adenosyl-L-homocysteine. Specifically methylates position 2 of adenine 2503 in 23S rRNA and position 2 of adenine 37 in tRNAs. m2A2503 modification seems to play a crucial role in the proofreading step occurring at the peptidyl transferase center and thus would serve to optimize ribosomal fidelity. In Escherichia coli O17:K52:H18 (strain UMN026 / ExPEC), this protein is Dual-specificity RNA methyltransferase RlmN.